Consider the following 813-residue polypeptide: Raf homolog serine/threonine-protein kinase (813 aa).

The interval 1–79 (MSRINFKKSS…GGAGTSDKEP (79 aa)) is disordered. A compositionally biased stretch (low complexity) spans 9–23 (SSASTTPTSPHCPSP). Positions 85–161 (KMIMVHLPFD…PGNELWVHSE (77 aa)) constitute an RBD domain. Residues 170–217 (KHAIVRRTFIPPKSCDVCNNPIWMMGFRCEFCQFKFHQRCSSFAPLYC) form a Phorbol-ester/DAG-type zinc finger. Residues Cys184, Cys187, Cys198, Cys201, His206, Cys209, and Cys217 each contribute to the Zn(2+) site. Polar residues-rich tracts occupy residues 258–273 (TSGQ…SHPD) and 291–301 (SPQNETSQLSP). Disordered regions lie at residues 258-315 (TSGQ…SAPN), 338-358 (QRLE…QARH), and 383-472 (TPLG…PHHE). A compositionally biased stretch (basic and acidic residues) spans 338-348 (QRLEEESRDKT). Over residues 386–399 (GSNSPSSTCSSPPG) the composition is skewed to low complexity. Residues 406-421 (TLGQSPNVSGSTTSSL) are compositionally biased toward polar residues. The span at 453 to 462 (SPGERLDAQR) shows a compositional bias: basic and acidic residues. The region spanning 481 to 748 (FIIQYKVGSG…VLERLRDIIL (268 aa)) is the Protein kinase domain. Residues 487-495 (VGSGSFGTV) and Lys507 each bind ATP. Asp602 functions as the Proton acceptor in the catalytic mechanism.

Belongs to the protein kinase superfamily. TKL Ser/Thr protein kinase family. RAF subfamily. Interacts with cdf-1 in a zinc-dependent manner which promotes its activity. It depends on Zn(2+) as a cofactor.

It carries out the reaction L-seryl-[protein] + ATP = O-phospho-L-seryl-[protein] + ADP + H(+). The enzyme catalyses L-threonyl-[protein] + ATP = O-phospho-L-threonyl-[protein] + ADP + H(+). Functionally, protein kinase that participates in the induction of vulva and has roles in fertility and viability. Acts downstream of the Ras protein let-60. Required for progression of developing oocytes through the pachytene stage. Plays a role in responses to M.nematophilum-mediated bacterial infection by promoting tail swelling and preventing constipation. Positively regulates lifespan upstream of mek-2 and mpk-1. In Caenorhabditis elegans, this protein is Raf homolog serine/threonine-protein kinase (lin-45).